A 258-amino-acid polypeptide reads, in one-letter code: tRNA pseudouridine synthase A (258 aa).

Asp-52 functions as the Nucleophile in the catalytic mechanism. Tyr-110 is a substrate binding site.

Belongs to the tRNA pseudouridine synthase TruA family. Homodimer.

The catalysed reaction is uridine(38/39/40) in tRNA = pseudouridine(38/39/40) in tRNA. Functionally, formation of pseudouridine at positions 38, 39 and 40 in the anticodon stem and loop of transfer RNAs. This is tRNA pseudouridine synthase A from Francisella tularensis subsp. tularensis (strain FSC 198).